A 214-amino-acid chain; its full sequence is Phosphatidylcholine transfer protein (214 aa).

At M1 the chain carries N-acetylmethionine. An START domain is found at 1-212 (MELAAGSFSE…MARACQNYLK (212 aa)). A 1,2-diacyl-sn-glycero-3-phosphocholine-binding residues include Y72 and R78. S139 is modified (phosphoserine). Q157 serves as a coordination point for a 1,2-diacyl-sn-glycero-3-phosphocholine.

Interacts with ACOT13/THEM2. Highest expression in liver, placenta, testis, kidney and heart. Low levels in brain and lung. No expression detected in thymus.

It localises to the cytoplasm. Catalyzes the transfer of phosphatidylcholine between membranes. Binds a single lipid molecule. The protein is Phosphatidylcholine transfer protein (PCTP) of Homo sapiens (Human).